Reading from the N-terminus, the 307-residue chain is Nitrogenase iron protein 2 (307 aa).

Glycine 13–serine 20 provides a ligand contact to ATP. Cysteine 101 is a [4Fe-4S] cluster binding site. Arginine 104 is subject to ADP-ribosylarginine; by dinitrogenase reductase ADP-ribosyltransferase. Cysteine 135 serves as a coordination point for [4Fe-4S] cluster. Residues glutamine 285 to alanine 307 are disordered.

Belongs to the NifH/BchL/ChlL family. Homodimer. [4Fe-4S] cluster is required as a cofactor. In terms of processing, the reversible ADP-ribosylation of Arg-104 inactivates the nitrogenase reductase and regulates nitrogenase activity.

It carries out the reaction N2 + 8 reduced [2Fe-2S]-[ferredoxin] + 16 ATP + 16 H2O = H2 + 8 oxidized [2Fe-2S]-[ferredoxin] + 2 NH4(+) + 16 ADP + 16 phosphate + 6 H(+). Functionally, the key enzymatic reactions in nitrogen fixation are catalyzed by the nitrogenase complex, which has 2 components: the iron protein and the molybdenum-iron protein. The protein is Nitrogenase iron protein 2 (nifH2) of Mastigocladus laminosus (Fischerella sp.).